The primary structure comprises 374 residues: Alginate lyase (374 aa).

The signal sequence occupies residues 1–23 (MHKTRLALSCLLGSLLLSGAVHA). Substrate contacts are provided by residues 62 to 63 (SK), 135 to 136 (HT), and Tyr-253.

This sequence belongs to the polysaccharide lyase 5 family.

It is found in the periplasm. The enzyme catalyses Eliminative cleavage of alginate to give oligosaccharides with 4-deoxy-alpha-L-erythro-hex-4-enuronosyl groups at their non-reducing ends and beta-D-mannuronate at their reducing end.. Catalyzes the depolymerization of alginate by cleaving the beta-1,4 glycosidic bond between two adjacent sugar residues via a beta-elimination mechanism. May serve to degrade mislocalized alginate that is trapped in the periplasmic space. This is Alginate lyase from Azotobacter vinelandii (strain DJ / ATCC BAA-1303).